Consider the following 210-residue polypeptide: uncharacterized protein (210 aa).

The 90-residue stretch at Ser-2–Val-91 folds into the CS domain. Positions Gly-165–Ser-210 are disordered. Residues Asp-173–Glu-184 are compositionally biased toward acidic residues. Residues Val-185–Ser-210 show a composition bias toward basic and acidic residues.

This is an uncharacterized protein from Oryza sativa subsp. indica (Rice).